Here is a 494-residue protein sequence, read N- to C-terminus: Cytochrome P450 2A7 (494 aa).

A heme-binding site is contributed by cysteine 439.

The protein belongs to the cytochrome P450 family. Requires heme as cofactor.

It localises to the endoplasmic reticulum membrane. It is found in the microsome membrane. It catalyses the reaction an organic molecule + reduced [NADPH--hemoprotein reductase] + O2 = an alcohol + oxidized [NADPH--hemoprotein reductase] + H2O + H(+). In terms of biological role, cytochromes P450 are a group of heme-thiolate monooxygenases. In liver microsomes, this enzyme is involved in an NADPH-dependent electron transport pathway. It oxidizes a variety of structurally unrelated compounds, including steroids, fatty acids, and xenobiotics. The sequence is that of Cytochrome P450 2A7 (CYP2A7) from Homo sapiens (Human).